Consider the following 619-residue polypeptide: Interferon-activable protein 204 (619 aa).

Residues 1–88 (MVNEYKRIVL…AEILKKERSE (88 aa)) enclose the Pyrin domain. A Nuclear export signal motif is present at residues 24–35 (LFKSLLARDLNL). A compositionally biased stretch (basic and acidic residues) spans 86–99 (RSEVTGETSLEKNG). Positions 86 to 223 (RSEVTGETSL…QNQNIPRGAV (138 aa)) are disordered. The span at 122–153 (TSATQEETSTAQAGTSTAQARTSTAQAGTSTA) shows a compositional bias: low complexity. 3 consecutive repeat copies span residues 134–140 (AGTSTAQ), 141–147 (ARTSTAQ), and 148–154 (AGTSTAQ). The interval 134-154 (AGTSTAQARTSTAQAGTSTAQ) is 3 X 7 AA tandem repeats of A-[GR]-T-S-T-A-Q. A Nuclear localization signal motif is present at residues 150–157 (TSTAQKRK). Positions 159 to 176 (MREEETGVKKSKAAKEPD) are enriched in basic and acidic residues. Low complexity predominate over residues 190–206 (SPILHSSSSASSNIPSA). The span at 207–218 (KNQKSQPQNQNI) shows a compositional bias: polar residues. 2 consecutive HIN-200 domains span residues 213 to 413 (PQNQ…IKIS) and 417 to 615 (NVPK…MQVI). Positions 550 to 614 (KKTERNKFIY…RSVRHSYMQV (65 aa)) are interaction with ID2.

This sequence belongs to the HIN-200 family. Interacts with UBTF. Interacts with RUNX2. Interacts with ID1, ID2 and ID3. Interacts with STING. In terms of processing, acetylated upon bacterial infection, leading to translocation from nucleus to cytoplasm and subsequent recruitment of STING to activate IFN-beta production. In terms of tissue distribution, present in osteoblasts (at protein level).

It localises to the nucleus. The protein resides in the nucleolus. The protein localises to the cytoplasm. Its function is as follows. Interferon-stimulated protein that plays a role in several biological processes including cell differentiation, autophagy and innate immunity. Cooperates with CGAS to sense dsDNA and activates the STING-dependent type I IFN pathway. Mechanistically, gets acetylated upon bacterial infection and then translocates from nucleus into cytoplasm to recruit STING for activation of TBK1-dependent IRF3 nuclear translocation and IFN-beta release. Inhibits the transcription of ribosomal RNA. May inhibit DNA binding by UBTF. Inhibits cell growth via p53/TP53 and RB1-dependent and independent pathways. Acts as a coactivator of RUNX2 during osteogenesis. May be involved in macrophage differentiation. Enables skeletal muscle and cardiac myocyte differentiation by sequestring Id proteins in the cytosol and promoting their ubiquitination and subsequent degradation. In Mus musculus (Mouse), this protein is Interferon-activable protein 204 (Ifi204).